We begin with the raw amino-acid sequence, 413 residues long: Multifunctional CCA protein (413 aa).

The ATP site is built by G8 and R11. Residues G8 and R11 each contribute to the CTP site. Positions 21 and 23 each coordinate Mg(2+). ATP contacts are provided by R91, R143, and R146. Residues R91, R143, and R146 each contribute to the CTP site. The HD domain maps to T232–L333.

It belongs to the tRNA nucleotidyltransferase/poly(A) polymerase family. Bacterial CCA-adding enzyme type 1 subfamily. In terms of assembly, monomer. Can also form homodimers and oligomers. Mg(2+) is required as a cofactor. It depends on Ni(2+) as a cofactor.

It carries out the reaction a tRNA precursor + 2 CTP + ATP = a tRNA with a 3' CCA end + 3 diphosphate. It catalyses the reaction a tRNA with a 3' CCA end + 2 CTP + ATP = a tRNA with a 3' CCACCA end + 3 diphosphate. Its function is as follows. Catalyzes the addition and repair of the essential 3'-terminal CCA sequence in tRNAs without using a nucleic acid template. Adds these three nucleotides in the order of C, C, and A to the tRNA nucleotide-73, using CTP and ATP as substrates and producing inorganic pyrophosphate. tRNA 3'-terminal CCA addition is required both for tRNA processing and repair. Also involved in tRNA surveillance by mediating tandem CCA addition to generate a CCACCA at the 3' terminus of unstable tRNAs. While stable tRNAs receive only 3'-terminal CCA, unstable tRNAs are marked with CCACCA and rapidly degraded. This Burkholderia ambifaria (strain MC40-6) protein is Multifunctional CCA protein.